We begin with the raw amino-acid sequence, 171 residues long: Protein-export protein SecB (171 aa).

It belongs to the SecB family. Homotetramer, a dimer of dimers. One homotetramer interacts with 1 SecA dimer.

It is found in the cytoplasm. Its function is as follows. One of the proteins required for the normal export of preproteins out of the cell cytoplasm. It is a molecular chaperone that binds to a subset of precursor proteins, maintaining them in a translocation-competent state. It also specifically binds to its receptor SecA. This chain is Protein-export protein SecB, found in Histophilus somni (strain 129Pt) (Haemophilus somnus).